Reading from the N-terminus, the 556-residue chain is Single-strand DNA-binding protein (556 aa).

Disordered stretches follow at residues 1-95 (MDPK…SEVE) and 527-556 (FVRP…VNSL). Polar residues-rich tracts occupy residues 10-25 (ENIT…TSDF) and 36-51 (VNST…GSQE). 2 stretches are compositionally biased toward basic and acidic residues: residues 52 to 73 (TPEH…RLDA) and 539 to 548 (DSRRTYESRP).

In terms of assembly, interacts with host VIP2 that promotes T-DNA integration into the host genome. Forms a complex made of virE2 and host proteins VIP1 and VBF. Forms heterodimers with the chaperone protein virE1 that prevent virE2 anarchic homopolymerization. Interacts with A.thaliana VIP1 that mediates its translocation to the host nucleus. Forms a complex made of VirE2, host VIP1 and VIP2 and single-stranded DNA (ssDNA).

Its subcellular location is the secreted. It is found in the host nucleus. Functionally, involved in DNA transformation; mediates the nuclear uptake of single-stranded DNA copies of the transferred DNA (T-DNA) element. Binds single-stranded but not double-stranded DNA regardless of nucleotide sequence composition. This Agrobacterium fabrum (strain C58 / ATCC 33970) (Agrobacterium tumefaciens (strain C58)) protein is Single-strand DNA-binding protein (virE2).